The sequence spans 365 residues: Putative outer membrane porin protein NmpC (365 aa).

The N-terminal stretch at 1 to 23 (MKKLTVAISAVAASVLMAMSAQA) is a signal peptide.

It belongs to the Gram-negative porin family. In terms of assembly, homotrimer.

The protein localises to the cell outer membrane. The polypeptide is Putative outer membrane porin protein NmpC (nmpC) (Escherichia coli (strain K12)).